Here is a 446-residue protein sequence, read N- to C-terminus: Tubulin beta-5 chain (446 aa).

Residues 1-4 carry the MREI motif motif; that stretch reads MREI. GTP is bound by residues Gln11, Glu69, Ser138, Gly142, Thr143, Gly144, Asn204, and Asn226. Glu69 contributes to the Mg(2+) binding site. Glu438 carries the 5-glutamyl polyglutamate modification.

It belongs to the tubulin family. As to quaternary structure, dimer of alpha and beta chains. A typical microtubule is a hollow water-filled tube with an outer diameter of 25 nm and an inner diameter of 15 nM. Alpha-beta heterodimers associate head-to-tail to form protofilaments running lengthwise along the microtubule wall with the beta-tubulin subunit facing the microtubule plus end conferring a structural polarity. Microtubules usually have 13 protofilaments but different protofilament numbers can be found in some organisms and specialized cells. Requires Mg(2+) as cofactor. Post-translationally, some glutamate residues at the C-terminus are polyglycylated, resulting in polyglycine chains on the gamma-carboxyl group. Glycylation is mainly limited to tubulin incorporated into axonemes (cilia and flagella) whereas glutamylation is prevalent in neuronal cells, centrioles, axonemes, and the mitotic spindle. Both modifications can coexist on the same protein on adjacent residues, and lowering polyglycylation levels increases polyglutamylation, and reciprocally. The precise function of polyglycylation is still unclear. Some glutamate residues at the C-terminus are polyglutamylated, resulting in polyglutamate chains on the gamma-carboxyl group. Polyglutamylation plays a key role in microtubule severing by spastin (SPAST). SPAST preferentially recognizes and acts on microtubules decorated with short polyglutamate tails: severing activity by SPAST increases as the number of glutamates per tubulin rises from one to eight, but decreases beyond this glutamylation threshold.

The protein localises to the cytoplasm. Its subcellular location is the cytoskeleton. In terms of biological role, tubulin is the major constituent of microtubules, a cylinder consisting of laterally associated linear protofilaments composed of alpha- and beta-tubulin heterodimers. Microtubules grow by the addition of GTP-tubulin dimers to the microtubule end, where a stabilizing cap forms. Below the cap, tubulin dimers are in GDP-bound state, owing to GTPase activity of alpha-tubulin. This Gallus gallus (Chicken) protein is Tubulin beta-5 chain.